A 181-amino-acid polypeptide reads, in one-letter code: Oligoribonuclease (181 aa).

In terms of domain architecture, Exonuclease spans L8 to L171. The active site involves Y129.

Belongs to the oligoribonuclease family.

It is found in the cytoplasm. Functionally, 3'-to-5' exoribonuclease specific for small oligoribonucleotides. The sequence is that of Oligoribonuclease from Shewanella putrefaciens (strain CN-32 / ATCC BAA-453).